The following is a 78-amino-acid chain: MANVKFKVKKGDTVKIIAGDDKGKTGKILAVLAKKGQVIVEGCKVAKKAIKPSEKTPNGGHVNKEMPIDISNVAKVEG.

Residues 52–78 (PSEKTPNGGHVNKEMPIDISNVAKVEG) are disordered.

Belongs to the universal ribosomal protein uL24 family. In terms of assembly, part of the 50S ribosomal subunit.

Its function is as follows. One of two assembly initiator proteins, it binds directly to the 5'-end of the 23S rRNA, where it nucleates assembly of the 50S subunit. One of the proteins that surrounds the polypeptide exit tunnel on the outside of the subunit. The protein is Large ribosomal subunit protein uL24 of Campylobacter concisus (strain 13826).